The following is a 129-amino-acid chain: Phosphoribosyl-AMP cyclohydrolase (129 aa).

Residue Asp-76 participates in Mg(2+) binding. Cys-77 contacts Zn(2+). Positions 78 and 80 each coordinate Mg(2+). Residues Cys-97 and Cys-104 each contribute to the Zn(2+) site.

This sequence belongs to the PRA-CH family. In terms of assembly, homodimer. The cofactor is Mg(2+). Requires Zn(2+) as cofactor.

It localises to the cytoplasm. The enzyme catalyses 1-(5-phospho-beta-D-ribosyl)-5'-AMP + H2O = 1-(5-phospho-beta-D-ribosyl)-5-[(5-phospho-beta-D-ribosylamino)methylideneamino]imidazole-4-carboxamide. It functions in the pathway amino-acid biosynthesis; L-histidine biosynthesis; L-histidine from 5-phospho-alpha-D-ribose 1-diphosphate: step 3/9. Its function is as follows. Catalyzes the hydrolysis of the adenine ring of phosphoribosyl-AMP. This chain is Phosphoribosyl-AMP cyclohydrolase, found in Polaromonas naphthalenivorans (strain CJ2).